Consider the following 500-residue polypeptide: Aldehyde dehydrogenase, mitochondrial (500 aa).

N6-acetyllysine is present on residues Lys-35, Lys-56, and Lys-142. Residue 245 to 250 (GSTEVG) coordinates NAD(+). The Proton acceptor role is filled by Glu-268. The active-site Nucleophile is the Cys-302. Lys-358, Lys-366, Lys-409, Lys-411, Lys-424, and Lys-434 each carry N6-acetyllysine.

The protein belongs to the aldehyde dehydrogenase family. In terms of assembly, homotetramer. In response to mitochondrial stress, the precursor protein is ubiquitinated by the SIFI complex in the cytoplasm before mitochondrial import, leading to its degradation. Within the SIFI complex, UBR4 initiates ubiquitin chain that are further elongated or branched by KCMF1.

The protein localises to the mitochondrion matrix. The catalysed reaction is an aldehyde + NAD(+) + H2O = a carboxylate + NADH + 2 H(+). Its pathway is alcohol metabolism; ethanol degradation; acetate from ethanol: step 2/2. Required for clearance of cellular formaldehyde, a cytotoxic and carcinogenic metabolite that induces DNA damage. The chain is Aldehyde dehydrogenase, mitochondrial (ALDH2) from Equus caballus (Horse).